We begin with the raw amino-acid sequence, 189 residues long: UPF0301 protein PFLU_5755 (189 aa).

It belongs to the UPF0301 (AlgH) family.

The protein is UPF0301 protein PFLU_5755 of Pseudomonas fluorescens (strain SBW25).